Here is a 460-residue protein sequence, read N- to C-terminus: V-type ATP synthase beta chain (460 aa).

This sequence belongs to the ATPase alpha/beta chains family.

Produces ATP from ADP in the presence of a proton gradient across the membrane. The V-type beta chain is a regulatory subunit. In Clostridium novyi (strain NT), this protein is V-type ATP synthase beta chain.